The sequence spans 181 residues: Large ribosomal subunit protein uL5 (181 aa).

It belongs to the universal ribosomal protein uL5 family. As to quaternary structure, part of the 50S ribosomal subunit; contacts the 5S rRNA and probably tRNA. Forms a bridge to the 30S subunit in the 70S ribosome.

Its function is as follows. This is one of the proteins that bind and probably mediate the attachment of the 5S RNA into the large ribosomal subunit, where it forms part of the central protuberance. In the 70S ribosome it contacts protein S13 of the 30S subunit (bridge B1b), connecting the 2 subunits; this bridge is implicated in subunit movement. May contact the P site tRNA; the 5S rRNA and some of its associated proteins might help stabilize positioning of ribosome-bound tRNAs. The polypeptide is Large ribosomal subunit protein uL5 (Methanococcus maripaludis (strain C6 / ATCC BAA-1332)).